The chain runs to 569 residues: Formate--tetrahydrofolate ligase (569 aa).

68 to 75 is an ATP binding site; the sequence is TPAGEGKT.

It belongs to the formate--tetrahydrofolate ligase family.

The catalysed reaction is (6S)-5,6,7,8-tetrahydrofolate + formate + ATP = (6R)-10-formyltetrahydrofolate + ADP + phosphate. It functions in the pathway one-carbon metabolism; tetrahydrofolate interconversion. The polypeptide is Formate--tetrahydrofolate ligase (Psychrobacter sp. (strain PRwf-1)).